The primary structure comprises 699 residues: Elongation factor G (699 aa).

Positions 8-283 constitute a tr-type G domain; sequence EHIRNIGICA…AVVDFLPSPI (276 aa). GTP contacts are provided by residues 17-24, 81-85, and 135-138; these read AHIDAGKT, DTPGH, and NKMD.

This sequence belongs to the TRAFAC class translation factor GTPase superfamily. Classic translation factor GTPase family. EF-G/EF-2 subfamily.

Its subcellular location is the cytoplasm. Functionally, catalyzes the GTP-dependent ribosomal translocation step during translation elongation. During this step, the ribosome changes from the pre-translocational (PRE) to the post-translocational (POST) state as the newly formed A-site-bound peptidyl-tRNA and P-site-bound deacylated tRNA move to the P and E sites, respectively. Catalyzes the coordinated movement of the two tRNA molecules, the mRNA and conformational changes in the ribosome. The polypeptide is Elongation factor G (Rickettsia parkeri).